The primary structure comprises 260 residues: tRNA pseudouridine synthase A (260 aa).

The active-site Nucleophile is the Asp-60. Tyr-118 is a binding site for substrate.

It belongs to the tRNA pseudouridine synthase TruA family. Homodimer.

The enzyme catalyses uridine(38/39/40) in tRNA = pseudouridine(38/39/40) in tRNA. Its function is as follows. Formation of pseudouridine at positions 38, 39 and 40 in the anticodon stem and loop of transfer RNAs. This chain is tRNA pseudouridine synthase A, found in Leuconostoc citreum (strain KM20).